A 216-amino-acid polypeptide reads, in one-letter code: Probable GTP-binding protein EngB (216 aa).

The 175-residue stretch at 30-204 folds into the EngB-type G domain; the sequence is DGLEVAFAGR…HDVLARWLGL (175 aa). Residues 38 to 45, 64 to 68, 82 to 85, 149 to 152, and 182 to 185 each bind GTP; these read GRSNAGKS, GRTQL, DLPG, TKAD, and LFSA. The Mg(2+) site is built by Ser45 and Thr66.

The protein belongs to the TRAFAC class TrmE-Era-EngA-EngB-Septin-like GTPase superfamily. EngB GTPase family. Mg(2+) serves as cofactor.

In terms of biological role, necessary for normal cell division and for the maintenance of normal septation. This is Probable GTP-binding protein EngB from Azotobacter vinelandii (strain DJ / ATCC BAA-1303).